The following is a 449-amino-acid chain: Putative F-box/LRR-repeat protein 23 (449 aa).

LRR repeat units follow at residues 14–37 and 39–64; these read KLWR…HLKL and GNGL…DLRR. The F-box domain maps to 178 to 225; the sequence is LRNWAELPSKLTSSILLRLGAIEILQNAQKVCKPWHRVCKDPSMWRKI. LRR repeat units lie at residues 261-286, 287-311, 312-337, 344-367, 369-394, and 401-427; these read WYYG…GLVR, CFPI…LEVS, YCLF…KLNR, SNSG…HLQL, GNGL…DLRQ, and VGDL…DSDD.

The chain is Putative F-box/LRR-repeat protein 23 (FBL23) from Arabidopsis thaliana (Mouse-ear cress).